We begin with the raw amino-acid sequence, 968 residues long: Dynein axonemal intermediate chain 3 (968 aa).

The span at 1–33 (MKDTSSKRPKSKEANKKKTKDKSNADNLPKPEE) shows a compositional bias: basic and acidic residues. Disordered stretches follow at residues 1-39 (MKDT…ASEP) and 136-166 (KPPA…PEPQ). The span at 141–157 (GADEQMEDEEQQEEEEE) shows a compositional bias: acidic residues. WD repeat units lie at residues 407–447 (ECPD…DRLQ), 480–536 (GHKA…VMVH), and 712–753 (VYSK…RQPS). Residues 830–857 (LHTHTDQLRVLEERVREAKQNLLAVSDR) adopt a coiled-coil conformation. The segment covering 897–919 (KRQSDHQKKKKETEAEQQKKKTE) has biased composition (basic and acidic residues). The disordered stretch occupies residues 897 to 930 (KRQSDHQKKKKETEAEQQKKKTELVTPPKQEEEV).

As to quaternary structure, part of the multisubunit axonemal dynein complex formed at least of two heavy chains and a number of intermediate and light chains.

The protein resides in the cytoplasm. Functionally, may be involved in the regulation of cilia function. In Danio rerio (Zebrafish), this protein is Dynein axonemal intermediate chain 3 (dnai3).